The sequence spans 201 residues: Ras-related protein Rab-9A (201 aa).

Alanine 2 bears the N-acetylalanine mark. Glycine 17 provides a ligand contact to GDP. GTP is bound by residues glycine 17, valine 18, glycine 19, lysine 20, serine 21, serine 22, threonine 34, histidine 38, and threonine 39. GDP-binding residues include glycine 19, lysine 20, serine 21, and serine 22. A Mg(2+)-binding site is contributed by serine 21. The Switch 1 motif lies at 31 to 42 (KFDTQLFHTIGV). Mg(2+) contacts are provided by threonine 39 and aspartate 62. The Switch 2 motif lies at 64-78 (AGQERFRSLRTPFYR). 6 residues coordinate GTP: glycine 65, asparagine 124, lysine 125, aspartate 127, alanine 155, and lysine 156. The GDP site is built by asparagine 124, lysine 125, aspartate 127, alanine 155, and lysine 156. Serine 179 carries the phosphoserine modification. Threonine 187 carries the post-translational modification Phosphothreonine. 2 S-geranylgeranyl cysteine lipidation sites follow: cysteine 200 and cysteine 201.

It belongs to the small GTPase superfamily. Rab family. As to quaternary structure, interacts (preferentially in its GTP-bound form) with GCC2 (via its GRIP domain). Interacts (GTP-bound form) with SGSM1; the GDP-bound form has much lower affinity for SGSM1. Interacts with SGSM2. The GTP-bound form but not the GDP-bound form interacts with HPS4 and BLOC-3 complex (heterodimer of HPS1 and HPS4) but does not interact with HPS1 alone. Interacts (GTP-bound form) with NDE1; two RAB9A-GTP molecules lie on the opposite sides of the NDE1 homodimer; the interaction leads to RAB9A-dynein motor tethering. Interacts (GTP-bound form) with NDEL1. Mg(2+) is required as a cofactor.

The protein localises to the cell membrane. It localises to the endoplasmic reticulum membrane. Its subcellular location is the golgi apparatus membrane. The protein resides in the late endosome. It is found in the cytoplasmic vesicle. The protein localises to the phagosome membrane. It localises to the phagosome. Its subcellular location is the cytoplasmic vesicle membrane. The protein resides in the melanosome. The enzyme catalyses GTP + H2O = GDP + phosphate + H(+). Its activity is regulated as follows. Regulated by guanine nucleotide exchange factors (GEFs) which promote the exchange of bound GDP for free GTP. Regulated by GTPase activating proteins (GAPs) which increase the GTP hydrolysis activity. Inhibited by GDP dissociation inhibitors (GDIs). In terms of biological role, the small GTPases Rab are key regulators of intracellular membrane trafficking, from the formation of transport vesicles to their fusion with membranes. Rabs cycle between an inactive GDP-bound form and an active GTP-bound form that is able to recruit to membranes different sets of downstream effectors directly responsible for vesicle formation, movement, tethering and fusion. RAB9A is involved in the transport of proteins between the endosomes and the trans-Golgi network (TGN). Specifically uses NDE1/NDEL1 as an effector to interact with the dynein motor complex in order to control retrograde trafficking of RAB9-associated late endosomes to the TGN. Involved in the recruitment of SGSM2 to melanosomes and is required for the proper trafficking of melanogenic enzymes TYR, TYRP1 and DCT/TYRP2 to melanosomes in melanocytes. The protein is Ras-related protein Rab-9A of Homo sapiens (Human).